Reading from the N-terminus, the 357-residue chain is Protein-L-isoaspartate O-methyltransferase domain-containing protein 1 (357 aa).

The N-myristoyl glycine moiety is linked to residue Gly2. Ser64 is an active-site residue. 3 adoMet binding motif regions span residues 85–94 (LNLGSGTGYL), 160–164 (YDRIY), and 181–191 (LKVGGILVMPI). Residues 240-250 (VRNLQDLARIY) are BC-box. Residues 299 to 333 (PLDSEEDEKMEEDNKEEEEKDHNEAMKPEEPPQNL) are disordered. The segment covering 301–317 (DSEEDEKMEEDNKEEEE) has biased composition (acidic residues). Positions 318-333 (KDHNEAMKPEEPPQNL) are enriched in basic and acidic residues. A CUL-box region spans residues 341 to 344 (LPLP).

The protein belongs to the methyltransferase superfamily. L-isoaspartyl/D-aspartyl protein methyltransferase family. As to quaternary structure, component of the probable ECS(PCMTD1) E3 ubiquitin-protein ligase complex, at least composed of CUL5, ELOB, ELOC, RBX2 and PCMTD1. Interacts (via the BC-box) with ELOB and ELOC; the interaction is direct and stabilizes PCMTD1.

It localises to the cytoplasm. It is found in the membrane. In terms of biological role, substrate recognition component of an ECS (Elongin BC-CUL5-SOCS-box protein) E3 ubiquitin ligase complex which mediates the ubiquitination and subsequent proteasomal degradation of target proteins. Specifically binds to the methyltransferase cofactor S-adenosylmethionine (AdoMet) via the N-terminal AdoMet binding motif, but does not display methyltransferase activity. May provide an alternate maintenance pathway for modified proteins by acting as a damage-specific E3 ubiquitin ligase adaptor protein. This chain is Protein-L-isoaspartate O-methyltransferase domain-containing protein 1, found in Homo sapiens (Human).